The following is a 768-amino-acid chain: 5-methyltetrahydropteroyltriglutamate--homocysteine methyltransferase (768 aa).

Residues 17–20 and lysine 113 each bind 5-methyltetrahydropteroyltri-L-glutamate; that span reads REWK. L-homocysteine-binding positions include 440–442 and glutamate 493; that span reads IGS. Residues 440 to 442 and glutamate 493 each bind L-methionine; that span reads IGS. Tryptophan 570 is a binding site for 5-methyltetrahydropteroyltri-L-glutamate. Residue aspartate 608 coordinates L-homocysteine. Aspartate 608 lines the L-methionine pocket. Glutamate 614 is a 5-methyltetrahydropteroyltri-L-glutamate binding site. 3 residues coordinate Zn(2+): histidine 650, cysteine 652, and glutamate 674. The active-site Proton donor is histidine 703. Residue cysteine 735 coordinates Zn(2+).

This sequence belongs to the vitamin-B12 independent methionine synthase family. Zn(2+) serves as cofactor.

It catalyses the reaction 5-methyltetrahydropteroyltri-L-glutamate + L-homocysteine = tetrahydropteroyltri-L-glutamate + L-methionine. It functions in the pathway amino-acid biosynthesis; L-methionine biosynthesis via de novo pathway; L-methionine from L-homocysteine (MetE route): step 1/1. In terms of biological role, catalyzes the transfer of a methyl group from 5-methyltetrahydrofolate to homocysteine resulting in methionine formation. This chain is 5-methyltetrahydropteroyltriglutamate--homocysteine methyltransferase, found in Lactiplantibacillus plantarum (strain ATCC BAA-793 / NCIMB 8826 / WCFS1) (Lactobacillus plantarum).